A 494-amino-acid chain; its full sequence is Ubiquinol-cytochrome-c reductase complex core protein I, mitochondrial (494 aa).

H70 serves as a coordination point for Zn(2+). Residue E73 is the Proton acceptor of the active site. Positions 74 and 150 each coordinate Zn(2+).

This sequence belongs to the peptidase M16 family. UQCRC1/QCR1 subfamily. As to quaternary structure, component of the ubiquinol-cytochrome c oxidoreductase (cytochrome b-c1 complex, complex III, CIII), a multisubunit enzyme composed of 10 subunits. The complex is composed of 3 respiratory subunits cytochrome b, cytochrome c1 and Rieske protein, 2 core protein subunits, and additional low-molecular weight protein subunits. The complex exists as an obligatory dimer and forms supercomplexes (SCs) in the inner mitochondrial membrane with cytochrome c oxidase (complex IV, CIV). It depends on Zn(2+) as a cofactor. The N-terminus is blocked.

Its subcellular location is the mitochondrion inner membrane. Component of the ubiquinol-cytochrome c oxidoreductase, a multisubunit transmembrane complex that is part of the mitochondrial electron transport chain which drives oxidative phosphorylation. The respiratory chain contains 3 multisubunit complexes succinate dehydrogenase (complex II, CII), ubiquinol-cytochrome c oxidoreductase (cytochrome b-c1 complex, complex III, CIII) and cytochrome c oxidase (complex IV, CIV), that cooperate to transfer electrons derived from NADH and succinate to molecular oxygen, creating an electrochemical gradient over the inner membrane that drives transmembrane transport and the ATP synthase. The cytochrome b-c1 complex catalyzes electron transfer from ubiquinol to cytochrome c, linking this redox reaction to translocation of protons across the mitochondrial inner membrane, with protons being carried across the membrane as hydrogens on the quinol. In the process called Q cycle, 2 protons are consumed from the matrix, 4 protons are released into the intermembrane space and 2 electrons are passed to cytochrome c. This is Ubiquinol-cytochrome-c reductase complex core protein I, mitochondrial from Euglena gracilis.